Consider the following 57-residue polypeptide: UPF0391 membrane protein Arad_3976 (57 aa).

2 helical membrane-spanning segments follow: residues 4–24 and 33–53; these read WAII…SGVS and VLFA…VMAG.

This sequence belongs to the UPF0391 family.

The protein localises to the cell membrane. This Rhizobium rhizogenes (strain K84 / ATCC BAA-868) (Agrobacterium radiobacter) protein is UPF0391 membrane protein Arad_3976.